A 162-amino-acid chain; its full sequence is uncharacterized protein (162 aa).

Positions 1–34 (MAREVISTSILMIATVVAVTAAIMVILPAVKDLA) are cleaved as a signal peptide.

This is an uncharacterized protein from Archaeoglobus fulgidus (strain ATCC 49558 / DSM 4304 / JCM 9628 / NBRC 100126 / VC-16).